We begin with the raw amino-acid sequence, 63 residues long: Cecropin-2 (63 aa).

The signal sequence occupies residues 1 to 23 (MNFYKVFIFVALILAISLGQSEA). R62 bears the Arginine amide mark.

The protein belongs to the cecropin family.

The protein resides in the secreted. Functionally, cecropins have lytic and antibacterial activity against several Gram-positive and Gram-negative bacteria. In Drosophila virilis (Fruit fly), this protein is Cecropin-2 (Cec2A).